Reading from the N-terminus, the 356-residue chain is UDP-N-acetylglucosamine--N-acetylmuramyl-(pentapeptide) pyrophosphoryl-undecaprenol N-acetylglucosamine transferase (356 aa).

Residues 13–15, asparagine 125, arginine 161, serine 189, isoleucine 243, and glutamine 288 contribute to the UDP-N-acetyl-alpha-D-glucosamine site; that span reads TGG.

It belongs to the glycosyltransferase 28 family. MurG subfamily.

Its subcellular location is the cell inner membrane. It carries out the reaction di-trans,octa-cis-undecaprenyl diphospho-N-acetyl-alpha-D-muramoyl-L-alanyl-D-glutamyl-meso-2,6-diaminopimeloyl-D-alanyl-D-alanine + UDP-N-acetyl-alpha-D-glucosamine = di-trans,octa-cis-undecaprenyl diphospho-[N-acetyl-alpha-D-glucosaminyl-(1-&gt;4)]-N-acetyl-alpha-D-muramoyl-L-alanyl-D-glutamyl-meso-2,6-diaminopimeloyl-D-alanyl-D-alanine + UDP + H(+). It participates in cell wall biogenesis; peptidoglycan biosynthesis. Cell wall formation. Catalyzes the transfer of a GlcNAc subunit on undecaprenyl-pyrophosphoryl-MurNAc-pentapeptide (lipid intermediate I) to form undecaprenyl-pyrophosphoryl-MurNAc-(pentapeptide)GlcNAc (lipid intermediate II). The polypeptide is UDP-N-acetylglucosamine--N-acetylmuramyl-(pentapeptide) pyrophosphoryl-undecaprenol N-acetylglucosamine transferase (Cupriavidus metallidurans (strain ATCC 43123 / DSM 2839 / NBRC 102507 / CH34) (Ralstonia metallidurans)).